A 648-amino-acid polypeptide reads, in one-letter code: Macrolide export ATP-binding/permease protein MacB (648 aa).

The region spanning 5–243 (LELKDIRRSY…TGGTEPVVNT (239 aa)) is the ABC transporter domain. Residue 41-48 (GASGSGKS) participates in ATP binding. The next 4 membrane-spanning stretches (helical) occupy residues 273–293 (LLTM…VVVG), 523–543 (LFLT…VMNI), 576–596 (AVLV…LIAF), and 611–631 (PLAL…FGWL).

This sequence belongs to the ABC transporter superfamily. Macrolide exporter (TC 3.A.1.122) family. In terms of assembly, homodimer. Part of the tripartite efflux system MacAB-TolC, which is composed of an inner membrane transporter, MacB, a periplasmic membrane fusion protein, MacA, and an outer membrane component, TolC. The complex forms a large protein conduit and can translocate molecules across both the inner and outer membranes. Interacts with MacA.

Its subcellular location is the cell inner membrane. Its function is as follows. Part of the tripartite efflux system MacAB-TolC. MacB is a non-canonical ABC transporter that contains transmembrane domains (TMD), which form a pore in the inner membrane, and an ATP-binding domain (NBD), which is responsible for energy generation. Confers resistance against macrolides. The polypeptide is Macrolide export ATP-binding/permease protein MacB (Escherichia coli O6:K15:H31 (strain 536 / UPEC)).